The primary structure comprises 46 residues: Protein PsbN (46 aa).

A helical transmembrane segment spans residues 10 to 30; sequence LAIIVLVVLLGLTGLGVYMAF.

It belongs to the PsbN family.

It is found in the cellular thylakoid membrane. In terms of biological role, may play a role in photosystem I and II biogenesis. This chain is Protein PsbN, found in Prochlorococcus marinus (strain MIT 9211).